A 596-amino-acid polypeptide reads, in one-letter code: Protein FlbA (596 aa).

TPR repeat units follow at residues 91-124, 159-192, 193-226, and 228-260; these read GLAW…LPDH, VEGA…NPEA, AVLW…APDF, and KAYH…PGSP.

The polypeptide is Protein FlbA (flbA) (Caulobacter vibrioides (strain ATCC 19089 / CIP 103742 / CB 15) (Caulobacter crescentus)).